The following is a 593-amino-acid chain: Efflux pump FUBT (593 aa).

Residues 1–44 (MAIDPQPSSPSLSSETIANDTIGNDNNVNEPSVEPKTQENQHTV) form a disordered region. Residues 9-30 (SPSLSSETIANDTIGNDNNVNE) are compositionally biased toward polar residues. Residue asparagine 19 is glycosylated (N-linked (GlcNAc...) asparagine). The next 12 membrane-spanning stretches (helical) occupy residues 98–118 (WAFVLLQSLACLATTFASSAY), 135–155 (VATLGISLYVLGFTFGPLIWA), 167–187 (FFFTFMVATAFSAGAAGAGSI), 195–215 (FLTGSIGSAPLSNAPALIADM), 227–247 (MFSGAPFLGPAIGPIAGGFLG), 254–274 (WLHGLMAAFTGVTWIACTVFI), 337–357 (IYISIIYGTMYMCFAAFPIVF), 367–387 (IGGLAFTGIVIGVVLSIISFA), 410–430 (LPPAIMGSLLIPIGLFWFAWT), 438–458 (IVPIIGTVFFAWGLVLVFMAL), 468–488 (IFAASIMAANSALRSLFGAAF), and 503–523 (WASSIPAFLALACVPFPFLFY). The interval 570-593 (THNSHASAAHSHGHRRSLSYTRSV) is disordered.

This sequence belongs to the major facilitator superfamily. DHA1 family. Polyamines/proton antiporter (TC 2.A.1.2.16) subfamily.

Its subcellular location is the cell membrane. Its function is as follows. Efflux pump involved in export of fusaric acid, a mycotoxin with low to moderate toxicity to animals and humans, but with high phytotoxic properties. Constitutes a self-protecting mechanism of the fungus against critical levels of FSA within the cell. This Fusarium oxysporum (Fusarium vascular wilt) protein is Efflux pump FUBT.